Here is a 333-residue protein sequence, read N- to C-terminus: Phosphate acyltransferase (333 aa).

It belongs to the PlsX family. Homodimer. Probably interacts with PlsY.

The protein localises to the cytoplasm. The enzyme catalyses a fatty acyl-[ACP] + phosphate = an acyl phosphate + holo-[ACP]. It participates in lipid metabolism; phospholipid metabolism. In terms of biological role, catalyzes the reversible formation of acyl-phosphate (acyl-PO(4)) from acyl-[acyl-carrier-protein] (acyl-ACP). This enzyme utilizes acyl-ACP as fatty acyl donor, but not acyl-CoA. The chain is Phosphate acyltransferase from Desulforamulus reducens (strain ATCC BAA-1160 / DSM 100696 / MI-1) (Desulfotomaculum reducens).